Reading from the N-terminus, the 206-residue chain is Large ribosomal subunit protein uL4 (206 aa).

The tract at residues 48–97 (THAVKNRSLVSGGGKKPWKQKHTGRARQGSTRASQWVGGGKAMGPKPRDY) is disordered. Positions 63–72 (KPWKQKHTGR) are enriched in basic residues.

It belongs to the universal ribosomal protein uL4 family. In terms of assembly, part of the 50S ribosomal subunit.

One of the primary rRNA binding proteins, this protein initially binds near the 5'-end of the 23S rRNA. It is important during the early stages of 50S assembly. It makes multiple contacts with different domains of the 23S rRNA in the assembled 50S subunit and ribosome. In terms of biological role, forms part of the polypeptide exit tunnel. The chain is Large ribosomal subunit protein uL4 from Anaeromyxobacter dehalogenans (strain 2CP-1 / ATCC BAA-258).